Reading from the N-terminus, the 352-residue chain is tRNA N6-adenosine threonylcarbamoyltransferase (352 aa).

The Fe cation site is built by histidine 109 and histidine 113. Substrate contacts are provided by residues 136-140 (TVSGG), aspartate 169, glycine 182, aspartate 186, and asparagine 284. Aspartate 312 provides a ligand contact to Fe cation.

It belongs to the KAE1 / TsaD family. It depends on Fe(2+) as a cofactor.

The protein resides in the cytoplasm. It catalyses the reaction L-threonylcarbamoyladenylate + adenosine(37) in tRNA = N(6)-L-threonylcarbamoyladenosine(37) in tRNA + AMP + H(+). Its function is as follows. Required for the formation of a threonylcarbamoyl group on adenosine at position 37 (t(6)A37) in tRNAs that read codons beginning with adenine. Is involved in the transfer of the threonylcarbamoyl moiety of threonylcarbamoyl-AMP (TC-AMP) to the N6 group of A37, together with TsaE and TsaB. TsaD likely plays a direct catalytic role in this reaction. The chain is tRNA N6-adenosine threonylcarbamoyltransferase from Chloroherpeton thalassium (strain ATCC 35110 / GB-78).